The primary structure comprises 384 residues: PqqA peptide cyclase (384 aa).

The Radical SAM core domain occupies 15 to 231 (PGPPLWLLAE…NQWRDKLAAE (217 aa)). Residues C29, C33, and C36 each coordinate [4Fe-4S] cluster.

It belongs to the radical SAM superfamily. PqqE family. In terms of assembly, interacts with PqqD. The interaction is necessary for activity of PqqE. [4Fe-4S] cluster is required as a cofactor.

It catalyses the reaction [PQQ precursor protein] + S-adenosyl-L-methionine = E-Y cross-linked-[PQQ precursor protein] + 5'-deoxyadenosine + L-methionine + H(+). It participates in cofactor biosynthesis; pyrroloquinoline quinone biosynthesis. Functionally, catalyzes the cross-linking of a glutamate residue and a tyrosine residue in the PqqA protein as part of the biosynthesis of pyrroloquinoline quinone (PQQ). This chain is PqqA peptide cyclase, found in Ectopseudomonas mendocina (strain ymp) (Pseudomonas mendocina).